Reading from the N-terminus, the 240-residue chain is MKIVSDAKHTGRTRCTIHCQNCSISQLCLPFTLSEHELTQLDNIIERKKPVQKSQIIFQSGDELRSIYAIRSGTIKSYTISESGEEQITAFHLPGDLVGFDAIMNMKHVGFAQALETSMICEIPFDILDDLAGKMPKIRHQIMRLMSNEIKSDQEMILLLSKMSAEEKLAAFLHNLSQRYAAPGFSAREFRLTMTRGDIGNYLGLTIETISRLLGRFQKSGMITVQGKYITINRMDELTV.

The segment at Cys15–Cys28 is essential for the oxygen-regulated activity. One can recognise an HTH crp-type domain in the interval Met163 to Asp236. Positions Arg196–Gly215 form a DNA-binding region, H-T-H motif.

It is found in the cytoplasm. Confers a hemolytic phenotype on E.coli. May regulate, rather than mediate, hemolytic activity. This chain is Regulatory protein HlyX (hlyX), found in Actinobacillus pleuropneumoniae (Haemophilus pleuropneumoniae).